We begin with the raw amino-acid sequence, 297 residues long: Homoserine kinase (297 aa).

Position 82–92 (82–92) interacts with ATP; that stretch reads PLTRGLGSSAS.

This sequence belongs to the GHMP kinase family. Homoserine kinase subfamily.

The protein resides in the cytoplasm. The catalysed reaction is L-homoserine + ATP = O-phospho-L-homoserine + ADP + H(+). Its pathway is amino-acid biosynthesis; L-threonine biosynthesis; L-threonine from L-aspartate: step 4/5. Functionally, catalyzes the ATP-dependent phosphorylation of L-homoserine to L-homoserine phosphate. In Bacillus cereus (strain AH187), this protein is Homoserine kinase.